A 116-amino-acid polypeptide reads, in one-letter code: Aspartate 1-decarboxylase (116 aa).

S25 acts as the Schiff-base intermediate with substrate; via pyruvic acid in catalysis. S25 carries the post-translational modification Pyruvic acid (Ser). Residue T57 coordinates substrate. Y58 (proton donor) is an active-site residue. Residue 73–75 (GAA) coordinates substrate.

The protein belongs to the PanD family. In terms of assembly, heterooctamer of four alpha and four beta subunits. It depends on pyruvate as a cofactor. In terms of processing, is synthesized initially as an inactive proenzyme, which is activated by self-cleavage at a specific serine bond to produce a beta-subunit with a hydroxyl group at its C-terminus and an alpha-subunit with a pyruvoyl group at its N-terminus.

It localises to the cytoplasm. It carries out the reaction L-aspartate + H(+) = beta-alanine + CO2. Its pathway is cofactor biosynthesis; (R)-pantothenate biosynthesis; beta-alanine from L-aspartate: step 1/1. Catalyzes the pyruvoyl-dependent decarboxylation of aspartate to produce beta-alanine. This Fervidobacterium nodosum (strain ATCC 35602 / DSM 5306 / Rt17-B1) protein is Aspartate 1-decarboxylase.